Reading from the N-terminus, the 1279-residue chain is Myosin-1 (1279 aa).

A compositionally biased stretch (basic residues) spans 1-12 (MAIVKRGGRTRA). The tract at residues 1 to 25 (MAIVKRGGRTRAKQQQAPAKVNNGL) is disordered. Residues 48–736 (VGVSDLTLLS…TLFALEDMRD (689 aa)) form the Myosin motor domain. 141–148 (GESGAGKT) lines the ATP pocket. Position 371 is a phosphoserine (Ser371). Residues 419–502 (SIGILDIYGF…PGLFAALNDS (84 aa)) form an actin-binding region. IQ domains lie at 740 to 760 (HNMA…KEDA) and 761 to 786 (AKTI…YGNS). Positions 794–984 (RRRFSMLGSR…SGTVTVNQGL (191 aa)) constitute a TH1 domain. 2 stretches are compositionally biased toward polar residues: residues 980–989 (VNQGLPPTSK) and 1018–1027 (AFQSQPTASY). 4 disordered regions span residues 980–1001 (VNQG…LGKV), 1014–1132 (LAQP…PKHP), 1189–1216 (SPSA…SSNT), and 1253–1279 (LADA…DDDW). 2 stretches are compositionally biased toward low complexity: residues 1038–1056 (TQLY…PTRT) and 1067–1095 (STQT…KKIA). Residues 1116 to 1126 (APPPPPPPPAL) are compositionally biased toward pro residues. Residues 1129–1189 (PKHPTYRAMY…PIDYLQEESS (61 aa)) enclose the SH3 domain. A compositionally biased stretch (polar residues) spans 1189–1209 (SPSASAATQSYAPTTASSNPV). Residues 1268 to 1279 (SDAEDDDDDDDW) show a composition bias toward acidic residues.

It belongs to the TRAFAC class myosin-kinesin ATPase superfamily. Myosin family. Phosphorylation of the TEDS site (Ser-371) is required for the polarization of the actin cytoskeleton. Phosphorylation probably activates the myosin-I ATPase activity.

It localises to the cytoplasm. The protein resides in the cytoskeleton. Its subcellular location is the actin patch. Type-I myosin implicated in the organization of the actin cytoskeleton. Required for proper actin cytoskeleton polarization. At the cell cortex, assembles in patch-like structures together with proteins from the actin-polymerizing machinery and promotes actin assembly. Functions as actin nucleation-promoting factor (NPF) for the Arp2/3 complex. The sequence is that of Myosin-1 (MYO1) from Lodderomyces elongisporus (strain ATCC 11503 / CBS 2605 / JCM 1781 / NBRC 1676 / NRRL YB-4239) (Yeast).